Here is a 485-residue protein sequence, read N- to C-terminus: Probable glycine dehydrogenase (decarboxylating) subunit 2 (485 aa).

Lys273 carries the post-translational modification N6-(pyridoxal phosphate)lysine.

This sequence belongs to the GcvP family. C-terminal subunit subfamily. As to quaternary structure, the glycine cleavage system is composed of four proteins: P, T, L and H. In this organism, the P 'protein' is a heterodimer of two subunits. Pyridoxal 5'-phosphate serves as cofactor.

It carries out the reaction N(6)-[(R)-lipoyl]-L-lysyl-[glycine-cleavage complex H protein] + glycine + H(+) = N(6)-[(R)-S(8)-aminomethyldihydrolipoyl]-L-lysyl-[glycine-cleavage complex H protein] + CO2. The glycine cleavage system catalyzes the degradation of glycine. The P protein binds the alpha-amino group of glycine through its pyridoxal phosphate cofactor; CO(2) is released and the remaining methylamine moiety is then transferred to the lipoamide cofactor of the H protein. In Bacillus licheniformis (strain ATCC 14580 / DSM 13 / JCM 2505 / CCUG 7422 / NBRC 12200 / NCIMB 9375 / NCTC 10341 / NRRL NRS-1264 / Gibson 46), this protein is Probable glycine dehydrogenase (decarboxylating) subunit 2.